A 292-amino-acid polypeptide reads, in one-letter code: Protoheme IX farnesyltransferase (292 aa).

Helical transmembrane passes span 13–33, 35–55, 84–104, 106–126, 135–155, 161–181, 206–226, 231–251, and 263–283; these read ILFG…QGSI, ILLL…GCVV, VALV…WFGV, GYAF…YSLW, TVIG…AVTH, ALLL…AIAI, IECV…YCFG, FFLI…IIGF, and FFLY…FTYQ.

This sequence belongs to the UbiA prenyltransferase family. Protoheme IX farnesyltransferase subfamily.

The protein localises to the cell inner membrane. It carries out the reaction heme b + (2E,6E)-farnesyl diphosphate + H2O = Fe(II)-heme o + diphosphate. The protein operates within porphyrin-containing compound metabolism; heme O biosynthesis; heme O from protoheme: step 1/1. Converts heme B (protoheme IX) to heme O by substitution of the vinyl group on carbon 2 of heme B porphyrin ring with a hydroxyethyl farnesyl side group. In Acinetobacter baumannii (strain AB307-0294), this protein is Protoheme IX farnesyltransferase.